The chain runs to 133 residues: Small ribosomal subunit protein eS8 (133 aa).

The tract at residues 1 to 22 (MGFYQGPDNRKITGGLKGKHRD) is disordered.

The protein belongs to the eukaryotic ribosomal protein eS8 family. In terms of assembly, part of the 30S ribosomal subunit.

The protein is Small ribosomal subunit protein eS8 of Saccharolobus islandicus (strain M.14.25 / Kamchatka #1) (Sulfolobus islandicus).